The sequence spans 203 residues: Small ribosomal subunit protein uS7A (203 aa).

This sequence belongs to the universal ribosomal protein uS7 family. In terms of assembly, component of the small ribosomal subunit (SSU). Mature yeast ribosomes consist of a small (40S) and a large (60S) subunit. The 40S small subunit contains 1 molecule of ribosomal RNA (18S rRNA) and at least 33 different proteins. The large 60S subunit contains 3 rRNA molecules (25S, 5.8S and 5S rRNA) and at least 46 different proteins.

The protein localises to the cytoplasm. It is found in the nucleus. The protein resides in the nucleolus. Its function is as follows. Component of the ribosome, a large ribonucleoprotein complex responsible for the synthesis of proteins in the cell. The small ribosomal subunit (SSU) binds messenger RNAs (mRNAs) and translates the encoded message by selecting cognate aminoacyl-transfer RNA (tRNA) molecules. The large subunit (LSU) contains the ribosomal catalytic site termed the peptidyl transferase center (PTC), which catalyzes the formation of peptide bonds, thereby polymerizing the amino acids delivered by tRNAs into a polypeptide chain. The nascent polypeptides leave the ribosome through a tunnel in the LSU and interact with protein factors that function in enzymatic processing, targeting, and the membrane insertion of nascent chains at the exit of the ribosomal tunnel. The chain is Small ribosomal subunit protein uS7A (rps5) from Schizosaccharomyces pombe (strain 972 / ATCC 24843) (Fission yeast).